We begin with the raw amino-acid sequence, 188 residues long: MHNQKKNQGFSVKSVVATGIGAAVFFVLMKFIAIPTGVPNTTINVAEGWLALIAGLFGPVVGLLVGLIGHTLNDAVTYGAPWWSWVIADGVFGLLLGFGKKYLALEYGELTTKKLVQFNVWQAVSNVLVWVIIAPLGDIIIYKEAAQKVFLQGAVTTVVNTISVAIIGSLLLVAYVKSRPKKSSLRSE.

A run of 5 helical transmembrane segments spans residues 15-35, 48-68, 79-99, 121-141, and 154-174; these read VVAT…IAIP, GWLA…VGLI, GAPW…LGFG, WQAV…DIII, and AVTT…LLVA.

The protein belongs to the UPF0397 family.

Its subcellular location is the cell membrane. The chain is UPF0397 protein LCK_00164 from Leuconostoc citreum (strain KM20).